The sequence spans 146 residues: UPF0178 protein BCAH187_A3092 (146 aa).

This sequence belongs to the UPF0178 family.

This is UPF0178 protein BCAH187_A3092 from Bacillus cereus (strain AH187).